A 196-amino-acid polypeptide reads, in one-letter code: Ras-related protein RabC (196 aa).

13–20 (GESGVGKS) is a binding site for GTP. Positions 35 to 43 (FAPTLGVDF) match the Effector region motif. GTP is bound by residues 63–67 (DTAGQ) and 121–124 (NKSD). S-geranylgeranyl cysteine attachment occurs at residues Cys-195 and Cys-196.

Belongs to the small GTPase superfamily. Rab family.

The protein resides in the cell membrane. In Dictyostelium discoideum (Social amoeba), this protein is Ras-related protein RabC (rabC).